Consider the following 207-residue polypeptide: Protein phosphatase inhibitor 2 (207 aa).

3 disordered regions span residues 1 to 44, 65 to 97, and 110 to 146; these read MAAS…SKKS, LMKIDEPSTPYHSMVADDEDALSDSETTEALTP, and ESLEPKYRVREQESSGDEDSDLSPEEREKKRQFEMKR. Alanine 2 is subject to N-acetylalanine. The tract at residues 12–17 is required for binding PPP1CC; that stretch reads KGILKN. The segment covering 19–28 has biased composition (low complexity); it reads SSTTSSVVST. Over residues 35-44 the composition is skewed to basic and acidic residues; sequence SVDEELSKKS. The tract at residues 43–55 is required for binding PPP1CC; sequence KSQKWDEMSILAT. The residue at position 44 (serine 44) is a Phosphoserine; by ATM. Threonine 73 is modified (phosphothreonine; by GSK3). Residues 80–91 are compositionally biased toward acidic residues; it reads ADDEDALSDSET. Phosphoserine occurs at positions 87 and 89. Phosphothreonine is present on residues threonine 92 and threonine 96. The span at 112–122 shows a compositional bias: basic and acidic residues; the sequence is LEPKYRVREQE. 4 positions are modified to phosphoserine: serine 123, serine 124, serine 129, and serine 132. Acidic residues predominate over residues 123–132; the sequence is SSGDEDSDLS. The span at 133-145 shows a compositional bias: basic and acidic residues; that stretch reads PEEREKKRQFEMK. Residues 149-152 are required for binding PPP1CC catalytic center, displacing metal ions and inhibition of PPP1CC catalytic activity; sequence HYNE. A disordered region spans residues 165–207; it reads KDLNDEEEDEEMSETAAGESMNMEESSQGSATSDQLQNKSQSS. The segment covering 168–177 has biased composition (acidic residues); the sequence is NDEEEDEEMS. Polar residues predominate over residues 187-207; the sequence is MEESSQGSATSDQLQNKSQSS.

It belongs to the protein phosphatase inhibitor 2 family. In terms of assembly, heterodimer with PP1. Phosphorylation on Ser-44 by ATM activates PP1 by dissociating the PP1-PPP1R2 complex. Phosphorylation on Thr-73 by GSK3 activates PP1 by dissociating the PP1-PPP1R2 complex.

Functionally, inhibitor of protein-phosphatase 1. This is Protein phosphatase inhibitor 2 (PPP1R2) from Bos taurus (Bovine).